The sequence spans 139 residues: Coat protein TP2 (139 aa).

The protein resides in the virion. The protein is Coat protein TP2 of Thermoproteus tenax virus 1 (strain KRA1) (TTV1).